We begin with the raw amino-acid sequence, 583 residues long: MGFDYALVHLKYTIPPAVLLTWLYRPFFTKLDVYKVGYLVSIAVASTIPWDSYLIRTGIWSYPTHVIIGPKLCDIPLEEVFFFIIQTYNTSLLYLLLSRPTFQPVYLNTERGAARRQWRYMRLAGQVFFLALIAWGWRCIRHGGLGTYTGLILVWAGPFLLMLWSLAYQFILALPVTNTALPIFLPTLYLWVVDTLALRRGTWVISTGTKYGLHLWDGLEIEEALFFLATNALIVFGQLAFDNALAVLYTFPHLFTGPSLLPSPVLLMRALLTPCSKYHDARIKGLDEAVNRLKRKSRSFYLASATFPGPLRADLLLLYSFCRVADDLVDNASDADEARAWIAKMRKFLNNVYSDKLPQSVVHSQICDDFPPSTQSALLQLPATKLSPQPLEDLLHGFEMDLAFQQGPIIRTMEDLRVYSERVAGTVAQMCIQLIFYWYPSTLDTEEKNVIVAAGNSMGVALQYVNIARDIEVDAQIGRVYLPLNWLSEAGLSYDDVLKKPNQAQIQTLRKHLLNHAFSVYEKAKDSIERLPIEARGPIRVAVESYMEIGRILRSEQYQVKAGRATVPKSRRIMVAWRTLNSK.

A lycopene beta-cyclase region spans residues 1 to 243 (MGFDYALVHL…IVFGQLAFDN (243 aa)). A run of 7 helical transmembrane segments spans residues 3-23 (FDYA…LTWL), 35-55 (KVGY…SYLI), 75-97 (IPLE…YLLL), 120-140 (YMRL…WRCI), 151-171 (LILV…YQFI), 173-193 (ALPV…LWVV), and 221-241 (IEEA…QLAF). The interval 250–583 (TFPHLFTGPS…MVAWRTLNSK (334 aa)) is phytoene synthase.

It in the N-terminal section; belongs to the lycopene beta-cyclase family. This sequence in the C-terminal section; belongs to the phytoene/squalene synthase family.

It localises to the membrane. It carries out the reaction all-trans-lycopene = gamma-carotene. It catalyses the reaction gamma-carotene = all-trans-beta-carotene. The enzyme catalyses 2 (2E,6E,10E)-geranylgeranyl diphosphate = 15-cis-phytoene + 2 diphosphate. It participates in carotenoid biosynthesis; beta-carotene biosynthesis. The protein operates within carotenoid biosynthesis; phytoene biosynthesis; all-trans-phytoene from geranylgeranyl diphosphate: step 1/1. Functionally, bifunctional enzyme that catalyzes the reactions from geranylgeranyl diphosphate to phytoene (phytoene synthase) and lycopene to beta-carotene via the intermediate gamma-carotene (lycopene cyclase). The protein is Bifunctional lycopene cyclase/phytoene synthase of Pyrenophora tritici-repentis (strain Pt-1C-BFP) (Wheat tan spot fungus).